We begin with the raw amino-acid sequence, 292 residues long: AKT-interacting protein homolog B (292 aa).

Residues 1–44 are disordered; that stretch reads MNPFWNMPSASVRKRSDNDEKIATADQKISPARSSSAKKQLPSI. The span at 14 to 23 shows a compositional bias: basic and acidic residues; sequence KRSDNDEKIA. A UBC core domain is found at 75-223; that stretch reads YLEYSLLAEF…VVDSVKLCNS (149 aa).

The protein belongs to the ubiquitin-conjugating enzyme family. FTS subfamily.

The protein localises to the cytoplasm. It is found in the cell membrane. Its function is as follows. May function to promote vesicle trafficking and/or fusion. May also regulate apoptosis. The sequence is that of AKT-interacting protein homolog B (aktip-b) from Xenopus laevis (African clawed frog).